Here is a 407-residue protein sequence, read N- to C-terminus: MKRTFIMVLDSFGIGASADAKKFGDEGADTLGHIAEACARGEANVGRSGPLTLPNLSRLGLGKAAEESTGTFPVGLDKNADIIGAYGYASELSSGKDTPSGHWEIAGVPVLFDWGYFSDVENSFPQELLDKLVKRANLPGYLGNCHSSGTVILDQLGEEHMKTGKPIFYTSADSVFQIACHEETFGLDRLYELCEIAREELTDGGYNIGRVIARPFIGDKPGHFQRTGNRHDLAVEPPAPTMLKKLVDEKGGEVVSIGKIADIYAQVGITQKVKATGLDALFDATIEEMKKAGDNTIVFTNFVDFDSSYGHRRDVAGYAAALELFDRRLPELMALIKEDDILILTADHGCDPTWPGTDHTREHIPVLVYGPKVKPGSLGHRETFADIGQTVAAYFGLSPMDYGKNML.

Residues Asp10, Asp306, His311, Asp347, His348, and His359 each contribute to the Mn(2+) site.

The protein belongs to the phosphopentomutase family. Mn(2+) is required as a cofactor.

The protein resides in the cytoplasm. It carries out the reaction 2-deoxy-alpha-D-ribose 1-phosphate = 2-deoxy-D-ribose 5-phosphate. It catalyses the reaction alpha-D-ribose 1-phosphate = D-ribose 5-phosphate. It functions in the pathway carbohydrate degradation; 2-deoxy-D-ribose 1-phosphate degradation; D-glyceraldehyde 3-phosphate and acetaldehyde from 2-deoxy-alpha-D-ribose 1-phosphate: step 1/2. Functionally, isomerase that catalyzes the conversion of deoxy-ribose 1-phosphate (dRib-1-P) and ribose 1-phosphate (Rib-1-P) to deoxy-ribose 5-phosphate (dRib-5-P) and ribose 5-phosphate (Rib-5-P), respectively. This chain is Phosphopentomutase, found in Yersinia pestis bv. Antiqua (strain Antiqua).